The following is a 417-amino-acid chain: Serine hydroxymethyltransferase (417 aa).

(6S)-5,6,7,8-tetrahydrofolate-binding positions include Leu-121 and 125–127; that span reads GHL. The residue at position 229 (Lys-229) is an N6-(pyridoxal phosphate)lysine. Residue 355 to 357 participates in (6S)-5,6,7,8-tetrahydrofolate binding; that stretch reads SPF.

Belongs to the SHMT family. As to quaternary structure, homodimer. Pyridoxal 5'-phosphate is required as a cofactor.

Its subcellular location is the cytoplasm. The catalysed reaction is (6R)-5,10-methylene-5,6,7,8-tetrahydrofolate + glycine + H2O = (6S)-5,6,7,8-tetrahydrofolate + L-serine. It functions in the pathway one-carbon metabolism; tetrahydrofolate interconversion. Its pathway is amino-acid biosynthesis; glycine biosynthesis; glycine from L-serine: step 1/1. Functionally, catalyzes the reversible interconversion of serine and glycine with tetrahydrofolate (THF) serving as the one-carbon carrier. This reaction serves as the major source of one-carbon groups required for the biosynthesis of purines, thymidylate, methionine, and other important biomolecules. Also exhibits THF-independent aldolase activity toward beta-hydroxyamino acids, producing glycine and aldehydes, via a retro-aldol mechanism. The protein is Serine hydroxymethyltransferase of Shewanella sp. (strain ANA-3).